The sequence spans 669 residues: Exostosin-like 1 (669 aa).

Residues Met-1–Phe-8 lie on the Cytoplasmic side of the membrane. Residues Trp-9–Leu-29 traverse the membrane as a helical; Signal-anchor for type II membrane protein segment. Residues Ala-30–Pro-669 lie on the Lumenal side of the membrane. Asn-263 and Asn-480 each carry an N-linked (GlcNAc...) asparagine glycan. Cys-577 and Cys-627 are oxidised to a cystine. Residues Arg-601–Gln-621 are disordered.

The protein belongs to the glycosyltransferase 47 family.

The protein resides in the endoplasmic reticulum membrane. It carries out the reaction 3-O-{[(1-&gt;4)-beta-D-GlcA-(1-&gt;4)-alpha-D-GlcNAc](n)-(1-&gt;4)-beta-D-GlcA-(1-&gt;3)-beta-D-Gal-(1-&gt;3)-beta-D-Gal-(1-&gt;4)-beta-D-Xyl}-L-seryl-[protein] + UDP-N-acetyl-alpha-D-glucosamine = 3-O-{alpha-D-GlcNAc-[(1-&gt;4)-beta-D-GlcA-(1-&gt;4)-alpha-D-GlcNAc](n)-(1-&gt;4)-beta-D-GlcA-(1-&gt;3)-beta-D-Gal-(1-&gt;3)-beta-D-Gal-(1-&gt;4)-beta-D-Xyl}-L-seryl-[protein] + UDP + H(+). It functions in the pathway protein modification; protein glycosylation. Its function is as follows. Glycosyltransferase required for the biosynthesis of heparan-sulfate (HS). Transfers N-acetyl-alpha-D-glucosamine to the nascent HS chain (GlcNAcT-II activity). Appears to lack GlcNAcT I and GlcAT-II activities. This Mus musculus (Mouse) protein is Exostosin-like 1 (Extl1).